Consider the following 390-residue polypeptide: Centrosomal protein of 44 kDa (390 aa).

Positions 11–195 (RNLEQVLRLL…ISEDTLSPIT (185 aa)) are binds with microtubules and centrioles. The stretch at 233–267 (EITALQTMLAECQEKLKELTLIEKRLDCLEQKMKG) forms a coiled coil. Positions 323–347 (KNKVGRPASIPLSSRYSTASSDSTP) are disordered. Phosphoserine occurs at positions 331 and 345. The segment covering 335–345 (SSRYSTASSDS) has biased composition (low complexity). The residue at position 346 (T346) is a Phosphothreonine. Residues 361–385 (SEETTIQKMERMKKMFEETAELLKC) adopt a coiled-coil conformation.

Interacts with CROCC. Interacts with POC1B; the interaction is direct and recruits POC1B to centriolar microtubules. Binds to centriolar microtubules.

The protein resides in the cytoplasm. It is found in the cytoskeleton. It localises to the microtubule organizing center. Its subcellular location is the centrosome. The protein localises to the centriole. The protein resides in the spindle pole. It is found in the midbody. In terms of biological role, centriole-enriched microtubule-binding protein involved in centriole biogenesis. In collaboration with CEP295 and POC1B, is required for the centriole-to-centrosome conversion by ensuring the formation of bona fide centriole wall. Functions as a linker component that maintains centrosome cohesion. Associates with CROCC and regulates its stability and localization to the centrosome. The polypeptide is Centrosomal protein of 44 kDa (CEP44) (Macaca fascicularis (Crab-eating macaque)).